Consider the following 683-residue polypeptide: Putative boron transporter 5 (683 aa).

The Cytoplasmic portion of the chain corresponds to 1–38 (MEEERVEGSKRPFQGIIRDVKGRALCYKQDWIAGLRSG). A helical transmembrane segment spans residues 39 to 59 (FGILAPTTYVFFASALPVIAF). Over 60–80 (GEQLSHDTERSLSTVETLAST) the chain is Extracellular. A helical membrane pass occupies residues 81-101 (ALCGVIHSLLGGQPLLILGVA). The Cytoplasmic portion of the chain corresponds to 102–126 (EPTVLMYKYLYDFAKGRPELGKQLY). A helical membrane pass occupies residues 127 to 147 (LAWVAWVCVWTALLLFLMAIF). Residues 148-158 (NMAYIINRFTR) lie on the Extracellular side of the membrane. A helical transmembrane segment spans residues 159–179 (IAGELFGMLIAVLFLQQTIKG). Residues 180 to 200 (MVSEFRIPKGEDSKLEKYQFE) are Cytoplasmic-facing. The helical transmembrane segment at 201 to 221 (WLYTNGLLGLIFTVGLVYTAL) threads the bilayer. Residues 222–238 (KSRKARSWPYGTGCCRS) are Extracellular-facing. A helical membrane pass occupies residues 239–259 (FVADYGVPLMVVVWTALSFST). The Cytoplasmic segment spans residues 260–294 (PSKLPSGVPRRLVSPLPWDSVSLTHWTVIKDMGKV). The helical transmembrane segment at 295-315 (SPGYIFAAFIPALMIAGLYFF) threads the bilayer. Over 316-335 (DHSVVSQLAQQKEFNLKNPS) the chain is Extracellular. The chain crosses the membrane as a helical span at residues 336–356 (AYHYDILLLGFMVLICGMLGL). Residues 357-477 (PPSNGVLPQS…EQRVSNLLQS (121 aa)) are Cytoplasmic-facing. Residues 478 to 498 (LLVIGAVFALPVIKLIPTSLL) form a helical membrane-spanning segment. At 499–565 (WGYFAYMAID…QILYFGLCYG (67 aa)) the chain is on the extracellular side. The helical transmembrane segment at 566–586 (VTWIPVAGIMFPVLFFLLVAI) threads the bilayer. The Cytoplasmic segment spans residues 587–683 (RQYLLPKLFK…GDGDMSSSRE (97 aa)).

This sequence belongs to the anion exchanger (TC 2.A.31.3) family.

The protein localises to the membrane. Putative boron transporter. Boron is essential for maintaining the integrity of plants cell walls. The protein is Putative boron transporter 5 (BOR5) of Arabidopsis thaliana (Mouse-ear cress).